The sequence spans 745 residues: MEVMNLIEQPIKVTEWQQTYTYDSGIHSGANTCVPSLSSKGLIEEDEACGRQYTLKKTTTYTQSVPPGQGDLEYQMSTTARAKRVREAMCPGVTGEDSSLLLTTQVEGQTTNLQRLAEPSQLLKSAIVHLINYQDDAELATRALPELTKLLNDEDPVVVTKAAMIVNQLSKKEASRRALMGSPQLVAAVVRTMQNTSDLDTARCTTSILHNLSHHREGLLAIFKSGGIPALVRMLSSPVESVLFYAITTLHNLLLYQEGAKMAVRLADGLQKMVPLLNKNNPKFLAITTDCLQLLAYGNQESKLIILANGGPQALVQIMRNYSYEKLLWTTSRVLKVLSVCPSNKPAIVEAGGMQALGKHLTSNSPRLVQNCLWTLRNLSDVATKQEGLESVLKILVNQLSVDDVNVLTCATGTLSNLTCNNSKNKTLVTQNSGVEALIHAILRAGDKDDITEPAVCALRHLTSRHPEAEMAQNSVRLNYGIPAIVKLLNQPNQWPLVKATIGLIRNLALCPANHAPLQEAAVIPRLVQLLVKAHQDAQRHVAAGTQQPYTDGVRMEEIVEGCTGALHILARDPMNRMEIFRLNTIPLFVQLLYSSVENIQRVAAGVLCELAQDKEAADAIDAEGASAPLMELLHSRNEGTATYAAAVLFRISEDKNPDYRKRVSVELTNSLFKHDPAAWEAAQSMIPMNEPYADDMDATYRPMYSSDVPMDPLEMHMDMDGDYPIDTYSDGLRPPYATADHMLA.

M1 is modified (N-acetylmethionine). T14 carries O-linked (GlcNAc) threonine glycosylation. 2 positions are modified to phosphoserine: S99 and S125. ARM repeat units follow at residues N132–K171, K172–H215, R216–L255, E258–Y297, G298–C341, P342–D381, A383–C420, S423–S464, E470–L510, P512–T551, P574–Q613, and K615–R661. An interaction with DSC1 and DSG1 region spans residues N132–Y297. S182 carries the phosphoserine modification. Residues P574–R661 are interaction with DSC1. A phosphoserine mark is found at S665 and S730.

The protein belongs to the beta-catenin family. As to quaternary structure, homodimer. Component of an E-cadherin/catenin adhesion complex composed of at least E-cadherin/CDH1 and gamma-catenin/JUP, and possibly alpha-catenin/CTNNA1; the complex is located to adherens junctions. The stable association of CTNNA1 is controversial as CTNNA1 was shown not to bind to F-actin when assembled in the complex. Interacts with MUC1. Interacts with CAV1. Interacts with PTPRJ. Interacts with DSG1. Interacts with DSC1 and DSC2. Interacts with PKP2. Interacts with PKP3 (via N-terminus); the interaction is required for PKP3 localization to desmosome cell-cell junctions. Interacts with DSG4. In terms of processing, may be phosphorylated by FER.

It localises to the cell junction. Its subcellular location is the adherens junction. It is found in the desmosome. The protein resides in the cytoplasm. The protein localises to the cytoskeleton. It localises to the cell membrane. Its subcellular location is the nucleus. Functionally, common junctional plaque protein. The membrane-associated plaques are architectural elements in an important strategic position to influence the arrangement and function of both the cytoskeleton and the cells within the tissue. The presence of plakoglobin in both the desmosomes and in the intermediate junctions suggests that it plays a central role in the structure and function of submembranous plaques. Acts as a substrate for VE-PTP and is required by it to stimulate VE-cadherin function in endothelial cells. Can replace beta-catenin in E-cadherin/catenin adhesion complexes which are proposed to couple cadherins to the actin cytoskeleton. The sequence is that of Junction plakoglobin from Bos taurus (Bovine).